Reading from the N-terminus, the 463-residue chain is A-type ATP synthase subunit B (463 aa).

The protein belongs to the ATPase alpha/beta chains family. As to quaternary structure, has multiple subunits with at least A(3), B(3), C, D, E, F, H, I and proteolipid K(x).

The protein localises to the cell membrane. Its function is as follows. Component of the A-type ATP synthase that produces ATP from ADP in the presence of a proton gradient across the membrane. The B chain is a regulatory subunit. In Methanothermobacter thermautotrophicus (strain ATCC 29096 / DSM 1053 / JCM 10044 / NBRC 100330 / Delta H) (Methanobacterium thermoautotrophicum), this protein is A-type ATP synthase subunit B.